We begin with the raw amino-acid sequence, 410 residues long: Probable tRNA sulfurtransferase (410 aa).

Residues 58–167 enclose the THUMP domain; the sequence is AELTRRLQEV…RREIFVSVER (110 aa). ATP-binding positions include 185-186, 210-211, Arg267, Gly289, and Gln298; these read LL and HF.

It belongs to the ThiI family.

The protein resides in the cytoplasm. It catalyses the reaction [ThiI sulfur-carrier protein]-S-sulfanyl-L-cysteine + a uridine in tRNA + 2 reduced [2Fe-2S]-[ferredoxin] + ATP + H(+) = [ThiI sulfur-carrier protein]-L-cysteine + a 4-thiouridine in tRNA + 2 oxidized [2Fe-2S]-[ferredoxin] + AMP + diphosphate. The enzyme catalyses [ThiS sulfur-carrier protein]-C-terminal Gly-Gly-AMP + S-sulfanyl-L-cysteinyl-[cysteine desulfurase] + AH2 = [ThiS sulfur-carrier protein]-C-terminal-Gly-aminoethanethioate + L-cysteinyl-[cysteine desulfurase] + A + AMP + 2 H(+). It functions in the pathway cofactor biosynthesis; thiamine diphosphate biosynthesis. In terms of biological role, catalyzes the ATP-dependent transfer of a sulfur to tRNA to produce 4-thiouridine in position 8 of tRNAs, which functions as a near-UV photosensor. Also catalyzes the transfer of sulfur to the sulfur carrier protein ThiS, forming ThiS-thiocarboxylate. This is a step in the synthesis of thiazole, in the thiamine biosynthesis pathway. The sulfur is donated as persulfide by IscS. The polypeptide is Probable tRNA sulfurtransferase (Nocardia farcinica (strain IFM 10152)).